Here is a 76-residue protein sequence, read N- to C-terminus: Adropin (76 aa).

An N-terminal signal peptide occupies residues Met-1 to Ala-33. The segment at Ile-41–Pro-76 is disordered. Positions Ser-52–Lys-65 are enriched in pro residues.

The protein localises to the secreted. Functionally, involved in the regulation of glucose homeostasis and lipid metabolism. The sequence is that of Adropin (ENHO) from Bos taurus (Bovine).